The primary structure comprises 149 residues: Calmodulin (149 aa).

A2 carries the N-acetylalanine modification. 4 consecutive EF-hand domains span residues 8–43 (EQIAEFKEAFSLFDKDGDGTITTKELGTVMRSLGQN), 44–79 (PTEAELQDMINEVDTDGNGTIDFPEFLTMMARKMKE), 81–116 (DSEEEIREAFRVFDKDGNGFISAAELRHVMTNLGEK), and 117–149 (LTDEEVDEMIREADTDGDGQVNYEEFVGMMTSK). Residues D21, D23, D25, T27, E32, D57, D59, N61, T63, E68, D94, D96, N98, and E105 each coordinate Ca(2+). Residue K116 is modified to N6,N6,N6-trimethyllysine. Positions 130, 132, 134, 136, and 141 each coordinate Ca(2+).

This sequence belongs to the calmodulin family.

Calmodulin mediates the control of a large number of enzymes, ion channels and other proteins by Ca(2+). Among the enzymes to be stimulated by the calmodulin-Ca(2+) complex are a number of protein kinases and phosphatases. This Suberites domuncula (Sponge) protein is Calmodulin.